Here is a 181-residue protein sequence, read N- to C-terminus: Oligoribonuclease (181 aa).

Residues 8–171 (LVWLDMEMTG…ADIYESIDEL (164 aa)) enclose the Exonuclease domain. Residue tyrosine 129 is part of the active site.

It belongs to the oligoribonuclease family.

The protein localises to the cytoplasm. Functionally, 3'-to-5' exoribonuclease specific for small oligoribonucleotides. This is Oligoribonuclease from Bordetella bronchiseptica (strain ATCC BAA-588 / NCTC 13252 / RB50) (Alcaligenes bronchisepticus).